We begin with the raw amino-acid sequence, 125 residues long: Meiotically up-regulated gene 112 protein (125 aa).

The protein localises to the golgi apparatus. Functionally, has a role in meiosis. The polypeptide is Meiotically up-regulated gene 112 protein (mug112) (Schizosaccharomyces pombe (strain 972 / ATCC 24843) (Fission yeast)).